Here is a 265-residue protein sequence, read N- to C-terminus: 3-methyl-2-oxobutanoate hydroxymethyltransferase (265 aa).

Mg(2+) is bound by residues Asp-45 and Asp-84. Residues 45 to 46, Asp-84, and Lys-112 each bind 3-methyl-2-oxobutanoate; that span reads DS. Residue Glu-114 coordinates Mg(2+). The active-site Proton acceptor is the Glu-182.

This sequence belongs to the PanB family. In terms of assembly, homodecamer; pentamer of dimers. It depends on Mg(2+) as a cofactor.

Its subcellular location is the cytoplasm. It catalyses the reaction 3-methyl-2-oxobutanoate + (6R)-5,10-methylene-5,6,7,8-tetrahydrofolate + H2O = 2-dehydropantoate + (6S)-5,6,7,8-tetrahydrofolate. It participates in cofactor biosynthesis; (R)-pantothenate biosynthesis; (R)-pantoate from 3-methyl-2-oxobutanoate: step 1/2. Catalyzes the reversible reaction in which hydroxymethyl group from 5,10-methylenetetrahydrofolate is transferred onto alpha-ketoisovalerate to form ketopantoate. The chain is 3-methyl-2-oxobutanoate hydroxymethyltransferase from Baumannia cicadellinicola subsp. Homalodisca coagulata.